Consider the following 504-residue polypeptide: Cobyric acid synthase (504 aa).

One can recognise a GATase cobBQ-type domain in the interval 251-448; that stretch reads DITIAIVQLP…LHGLFDSDAF (198 aa). Cys332 (nucleophile) is an active-site residue. Residue His440 is part of the active site.

The protein belongs to the CobB/CobQ family. CobQ subfamily.

The protein operates within cofactor biosynthesis; adenosylcobalamin biosynthesis. Catalyzes amidations at positions B, D, E, and G on adenosylcobyrinic A,C-diamide. NH(2) groups are provided by glutamine, and one molecule of ATP is hydrogenolyzed for each amidation. In Salmonella gallinarum (strain 287/91 / NCTC 13346), this protein is Cobyric acid synthase.